Consider the following 778-residue polypeptide: Serine/threonine-protein kinase BRSK1 (778 aa).

Gly residues predominate over residues 1–12; that stretch reads MSSGSKEGGGGS. The disordered stretch occupies residues 1-29; sequence MSSGSKEGGGGSPAYHLPHPHPHPPQHAQ. A Protein kinase domain is found at 34 to 285; that stretch reads YRLEKTLGKG…LEQIQKHPWY (252 aa). Residues 40 to 48 and Lys-63 contribute to the ATP site; that span reads LGKGQTGLV. The Proton acceptor role is filled by Asp-156. The residue at position 189 (Thr-189) is a Phosphothreonine; by LKB1. A UBA domain is found at 314-356; that stretch reads ELDPDVLESMASLGCFRDRERLHRELRSEEENQEKMIYYLLLD. The segment covering 362 to 383 has biased composition (basic and acidic residues); the sequence is PSCEDQDLPPRNDVDPPRKRVD. A disordered region spans residues 362-548; the sequence is PSCEDQDLPP…SPGGGVGGAA (187 aa). Ser-399, Ser-443, Ser-447, and Ser-450 each carry phosphoserine. Over residues 430-457 the composition is skewed to low complexity; the sequence is SRSVSGASTGLSSSPLSSPRSPVFSFSP. Arg-466, Arg-481, Arg-484, and Arg-498 each carry omega-N-methylarginine. Positions 491 to 508 are enriched in pro residues; that stretch reads QPPPPSARSTPLPGPPGS. Phosphoserine is present on Ser-508. The segment covering 509-533 has biased composition (low complexity); the sequence is PRSSGGTPLHSPLHTPRASPTGTPG. An Omega-N-methylarginine modification is found at Arg-525. Thr-529 and Thr-535 each carry phosphothreonine. Omega-N-methylarginine is present on Arg-550. The disordered stretch occupies residues 560–588; sequence FLGSPRFHRRKMQVPTAEEMSSLTPESSP. The residue at position 583 (Thr-583) is a Phosphothreonine. Phosphoserine is present on residues Ser-586, Ser-587, and Ser-601. The tract at residues 719–778 is disordered; that stretch reads QPSVQALADEKNGAQTRPAGTPPRSLQPPPGRSDPDLSSSPRRGPPKDKKLLATNGTPLP.

The protein belongs to the protein kinase superfamily. CAMK Ser/Thr protein kinase family. SNF1 subfamily. Requires Mg(2+) as cofactor. In terms of processing, phosphorylated at Thr-189 by STK11/LKB1 in complex with STE20-related adapter-alpha (STRADA) pseudo kinase and CAB39. Not phosphorylated at Thr-189 by CaMKK2. In contrast, it is phosphorylated and activated by CaMKK1. May be inactivated via dephosphorylation of Thr-189 by PP2C. In terms of tissue distribution, present in the gray matter of the brain and spinal cord (at protein level). Expressed in the nervous system, distributed within the brain and spinal cord of embryonic and postnatal animals.

The protein resides in the cytoplasm. It localises to the nucleus. It is found in the cytoskeleton. The protein localises to the microtubule organizing center. Its subcellular location is the centrosome. The protein resides in the synapse. It localises to the presynaptic active zone. It is found in the cytoplasmic vesicle. The protein localises to the secretory vesicle. Its subcellular location is the synaptic vesicle. It carries out the reaction L-seryl-[protein] + ATP = O-phospho-L-seryl-[protein] + ADP + H(+). The catalysed reaction is L-threonyl-[protein] + ATP = O-phospho-L-threonyl-[protein] + ADP + H(+). It catalyses the reaction L-seryl-[tau protein] + ATP = O-phospho-L-seryl-[tau protein] + ADP + H(+). The enzyme catalyses L-threonyl-[tau protein] + ATP = O-phospho-L-threonyl-[tau protein] + ADP + H(+). Its activity is regulated as follows. Activated by phosphorylation on Thr-189 by STK11/LKB1. Its function is as follows. Serine/threonine-protein kinase that plays a key role in polarization of neurons and centrosome duplication. Phosphorylates CDC25B, CDC25C, MAPT/TAU, RIMS1, TUBG1, TUBG2 and WEE1. Following phosphorylation and activation by STK11/LKB1, acts as a key regulator of polarization of cortical neurons, probably by mediating phosphorylation of microtubule-associated proteins such as MAPT/TAU at 'Thr-504' and 'Ser-554'. Also regulates neuron polarization by mediating phosphorylation of WEE1 at 'Ser-642' in postmitotic neurons, leading to down-regulate WEE1 activity in polarized neurons. In neurons, localizes to synaptic vesicles and plays a role in neurotransmitter release, possibly by phosphorylating RIMS1. Also acts as a positive regulator of centrosome duplication by mediating phosphorylation of gamma-tubulin (TUBG1 and TUBG2) at 'Ser-131', leading to translocation of gamma-tubulin and its associated proteins to the centrosome. Involved in the UV-induced DNA damage checkpoint response, probably by inhibiting CDK1 activity through phosphorylation and activation of WEE1, and inhibition of CDC25B and CDC25C. This is Serine/threonine-protein kinase BRSK1 (Brsk1) from Mus musculus (Mouse).